Here is a 213-residue protein sequence, read N- to C-terminus: Pyridoxine/pyridoxamine 5'-phosphate oxidase (213 aa).

FMN-binding positions include 60-65 (RMVLMK), 75-76 (YS), lysine 82, and glutamine 104. Lysine 65 is a substrate binding site. Residues tyrosine 122 and arginine 126 each contribute to the substrate site. Residues 139 to 140 (QS) and tryptophan 184 contribute to the FMN site. Position 190–192 (190–192 (RLH)) interacts with substrate. Arginine 194 is an FMN binding site.

This sequence belongs to the pyridoxamine 5'-phosphate oxidase family. Homodimer. FMN is required as a cofactor.

It catalyses the reaction pyridoxamine 5'-phosphate + O2 + H2O = pyridoxal 5'-phosphate + H2O2 + NH4(+). It carries out the reaction pyridoxine 5'-phosphate + O2 = pyridoxal 5'-phosphate + H2O2. Its pathway is cofactor metabolism; pyridoxal 5'-phosphate salvage; pyridoxal 5'-phosphate from pyridoxamine 5'-phosphate: step 1/1. It participates in cofactor metabolism; pyridoxal 5'-phosphate salvage; pyridoxal 5'-phosphate from pyridoxine 5'-phosphate: step 1/1. Functionally, catalyzes the oxidation of either pyridoxine 5'-phosphate (PNP) or pyridoxamine 5'-phosphate (PMP) into pyridoxal 5'-phosphate (PLP). This is Pyridoxine/pyridoxamine 5'-phosphate oxidase from Nitrobacter winogradskyi (strain ATCC 25391 / DSM 10237 / CIP 104748 / NCIMB 11846 / Nb-255).